Reading from the N-terminus, the 345-residue chain is Small ribosomal subunit protein mS45 (345 aa).

The transit peptide at 1–27 (MSYGLTGTSSKLRGTSSIFSWTQVRHF) directs the protein to the mitochondrion.

The protein belongs to the mitochondrion-specific ribosomal protein mS45 family. In terms of assembly, component of the mitochondrial small ribosomal subunit (mt-SSU). Mature yeast 74S mitochondrial ribosomes consist of a small (37S) and a large (54S) subunit. The 37S small subunit contains a 15S ribosomal RNA (15S mt-rRNA) and 34 different proteins. The 54S large subunit contains a 21S rRNA (21S mt-rRNA) and 46 different proteins.

Its subcellular location is the mitochondrion. Its function is as follows. Component of the mitochondrial ribosome (mitoribosome), a dedicated translation machinery responsible for the synthesis of mitochondrial genome-encoded proteins, including at least some of the essential transmembrane subunits of the mitochondrial respiratory chain. The mitoribosomes are attached to the mitochondrial inner membrane and translation products are cotranslationally integrated into the membrane. The sequence is that of Small ribosomal subunit protein mS45 (MRPS35) from Saccharomyces cerevisiae (strain ATCC 204508 / S288c) (Baker's yeast).